Consider the following 679-residue polypeptide: tRNA uridine 5-carboxymethylaminomethyl modification enzyme MnmG (679 aa).

15-20 (GAGHAG) provides a ligand contact to FAD. Position 314 to 328 (314 to 328 (GPRYCPSIEDKIVRF)) interacts with NAD(+).

Belongs to the MnmG family. In terms of assembly, homodimer. Heterotetramer of two MnmE and two MnmG subunits. Requires FAD as cofactor.

Its subcellular location is the cytoplasm. Its function is as follows. NAD-binding protein involved in the addition of a carboxymethylaminomethyl (cmnm) group at the wobble position (U34) of certain tRNAs, forming tRNA-cmnm(5)s(2)U34. The polypeptide is tRNA uridine 5-carboxymethylaminomethyl modification enzyme MnmG (Roseiflexus sp. (strain RS-1)).